The chain runs to 45 residues: MSKRTFQPNNRRRAKTHGFRLRMRTRAGRAILATRRSKGRARLSA.

This sequence belongs to the bacterial ribosomal protein bL34 family.

The polypeptide is Large ribosomal subunit protein bL34 (rpmH) (Streptomyces coelicolor (strain ATCC BAA-471 / A3(2) / M145)).